A 352-amino-acid polypeptide reads, in one-letter code: N-acetyl-gamma-glutamyl-phosphate reductase (352 aa).

Cysteine 155 is a catalytic residue.

Belongs to the NAGSA dehydrogenase family. Type 1 subfamily.

It localises to the cytoplasm. The enzyme catalyses N-acetyl-L-glutamate 5-semialdehyde + phosphate + NADP(+) = N-acetyl-L-glutamyl 5-phosphate + NADPH + H(+). Its pathway is amino-acid biosynthesis; L-arginine biosynthesis; N(2)-acetyl-L-ornithine from L-glutamate: step 3/4. Catalyzes the NADPH-dependent reduction of N-acetyl-5-glutamyl phosphate to yield N-acetyl-L-glutamate 5-semialdehyde. The protein is N-acetyl-gamma-glutamyl-phosphate reductase of Crocosphaera subtropica (strain ATCC 51142 / BH68) (Cyanothece sp. (strain ATCC 51142)).